We begin with the raw amino-acid sequence, 372 residues long: Citrate/2-methylcitrate synthase (372 aa).

H188 contributes to the substrate binding site. H223 is a catalytic residue. 256–260 contributes to the CoA binding site; sequence KIMGF. H262 is an active-site residue. R272 is a binding site for substrate. The active site involves D314. The substrate site is built by R339 and R358.

This sequence belongs to the citrate synthase family.

It carries out the reaction propanoyl-CoA + oxaloacetate + H2O = 2-methylcitrate + CoA + H(+). It catalyses the reaction oxaloacetate + acetyl-CoA + H2O = citrate + CoA + H(+). Its pathway is carbohydrate metabolism; tricarboxylic acid cycle; isocitrate from oxaloacetate: step 1/2. Functionally, involved in both the tricarboxylic acid (TCA) and methylcitric acid cycles. Has both 2-methylcitrate synthase and citrate synthase activities. Catalyzes the condensation of propionyl-CoA and oxaloacetate to yield 2-methylcitrate (2-MC) and CoA, and the condensation of acetyl-CoA and oxaloacetate to yield citrate and CoA. Has 2.3-fold higher activity as a 2-methylcitrate synthase. Catalyzes the formation of either (2S,3R)- or (2R,3S)-2-methylcitrate. This chain is Citrate/2-methylcitrate synthase, found in Bacillus subtilis (strain 168).